A 334-amino-acid polypeptide reads, in one-letter code: L-lactate dehydrogenase B chain (334 aa).

Alanine 2 carries the N-acetylalanine modification. Lysine 7 bears the N6-acetyllysine mark. Serine 44 is subject to Phosphoserine. Residues 53 to 58 (DVLEDK) and arginine 100 each bind NAD(+). Lysine 58 carries the post-translational modification N6-acetyllysine. Residue arginine 107 participates in substrate binding. An N6-acetyllysine modification is found at lysine 119. Asparagine 139 lines the NAD(+) pocket. Residues asparagine 139 and arginine 170 each coordinate substrate. Histidine 194 acts as the Proton acceptor in catalysis. Tyrosine 240 carries the post-translational modification Phosphotyrosine. Threonine 249 is a substrate binding site. At lysine 329 the chain carries N6-acetyllysine.

It belongs to the LDH/MDH superfamily. LDH family. In terms of assembly, homotetramer. Interacts with PTEN upstream reading frame protein MP31; the interaction leads to inhibition of mitochondrial lactate dehydrogenase activity, preventing conversion of lactate to pyruvate in mitochondria.

It is found in the cytoplasm. It localises to the mitochondrion inner membrane. It carries out the reaction (S)-lactate + NAD(+) = pyruvate + NADH + H(+). It functions in the pathway fermentation; pyruvate fermentation to lactate; (S)-lactate from pyruvate: step 1/1. In terms of biological role, interconverts simultaneously and stereospecifically pyruvate and lactate with concomitant interconversion of NADH and NAD(+). In Monodelphis domestica (Gray short-tailed opossum), this protein is L-lactate dehydrogenase B chain (LDHB).